The following is a 458-amino-acid chain: Adenylosuccinate synthetase (458 aa).

GTP-binding positions include 17 to 23 (GDEGKGK) and 45 to 47 (GHT). Aspartate 18 serves as the catalytic Proton acceptor. Mg(2+)-binding residues include aspartate 18 and glycine 45. IMP is bound by residues 18 to 21 (DEGK), 43 to 46 (NAGH), threonine 137, arginine 151, glutamine 247, threonine 262, and arginine 330. Histidine 46 (proton donor) is an active-site residue. 326–332 (VTTGRSR) is a substrate binding site. Residues arginine 332, 358 to 360 (KLD), and 440 to 442 (STS) contribute to the GTP site.

This sequence belongs to the adenylosuccinate synthetase family. In terms of assembly, homodimer. Mg(2+) is required as a cofactor.

The protein localises to the cytoplasm. It catalyses the reaction IMP + L-aspartate + GTP = N(6)-(1,2-dicarboxyethyl)-AMP + GDP + phosphate + 2 H(+). It participates in purine metabolism; AMP biosynthesis via de novo pathway; AMP from IMP: step 1/2. Functionally, plays an important role in the de novo pathway of purine nucleotide biosynthesis. Catalyzes the first committed step in the biosynthesis of AMP from IMP. The sequence is that of Adenylosuccinate synthetase from Verminephrobacter eiseniae (strain EF01-2).